Reading from the N-terminus, the 310-residue chain is Nodulation protein D 1 (310 aa).

The HTH lysR-type domain maps to 6–63; the sequence is LDLNLLVALDALMTERQLTAAARRINLSQPAMSAAIARLRNYFHDDLFVMQGRELILT. Positions 23-42 form a DNA-binding region, H-T-H motif; sequence LTAAARRINLSQPAMSAAIA.

It belongs to the LysR transcriptional regulatory family.

Its function is as follows. NodD regulates the expression of the nodABCFE genes which encode other nodulation proteins. NodD is also a negative regulator of its own expression. Binds flavonoids as inducers. The protein is Nodulation protein D 1 (nodD1) of Neorhizobium galegae (Rhizobium galegae).